The following is a 352-amino-acid chain: Molybdenum import ATP-binding protein ModC (352 aa).

The ABC transporter domain maps to 2-230 (MLEINVKKRL…PLFEPWQEQG (229 aa)). 32-39 (GISGSGKS) lines the ATP pocket. The Mop domain maps to 290 to 352 (KTSIRNILSG…YAQIKAVSVM (63 aa)).

This sequence belongs to the ABC transporter superfamily. Molybdate importer (TC 3.A.1.8) family. As to quaternary structure, the complex is composed of two ATP-binding proteins (ModC), two transmembrane proteins (ModB) and a solute-binding protein (ModA).

It localises to the cell inner membrane. It catalyses the reaction molybdate(out) + ATP + H2O = molybdate(in) + ADP + phosphate + H(+). Part of the ABC transporter complex ModABC involved in molybdenum import. Responsible for energy coupling to the transport system. This is Molybdenum import ATP-binding protein ModC from Mannheimia succiniciproducens (strain KCTC 0769BP / MBEL55E).